The primary structure comprises 372 residues: Peptidyl-prolyl cis-trans isomerase D (372 aa).

The 164-residue stretch at 10–173 folds into the PPIase cyclophilin-type domain; the sequence is FFDIQIGQQQ…TDVTIAECGE (164 aa). The disordered stretch occupies residues 174–193; the sequence is LTGEDYDNADKQTPDATGDP. TPR repeat units follow at residues 215 to 248, 268 to 304, and 309 to 342; these read ASEL…LNEF, FTLH…ASAK, and AKVY…APSD.

This sequence belongs to the cyclophilin-type PPIase family. PPIase D subfamily.

The protein localises to the cytoplasm. The catalysed reaction is [protein]-peptidylproline (omega=180) = [protein]-peptidylproline (omega=0). In terms of biological role, PPIases accelerate the folding of proteins. It catalyzes the cis-trans isomerization of proline imidic peptide bonds in oligopeptides. The polypeptide is Peptidyl-prolyl cis-trans isomerase D (cpr6) (Emericella nidulans (strain FGSC A4 / ATCC 38163 / CBS 112.46 / NRRL 194 / M139) (Aspergillus nidulans)).